The chain runs to 196 residues: Large ribosomal subunit protein bL20 (196 aa).

This sequence belongs to the bacterial ribosomal protein bL20 family.

In terms of biological role, binds directly to 23S ribosomal RNA and is necessary for the in vitro assembly process of the 50S ribosomal subunit. It is not involved in the protein synthesizing functions of that subunit. In Oenococcus oeni (strain ATCC BAA-331 / PSU-1), this protein is Large ribosomal subunit protein bL20 (rplT).